A 232-amino-acid polypeptide reads, in one-letter code: Ion-translocating oxidoreductase complex subunit E (232 aa).

Transmembrane regions (helical) follow at residues 39–59 (LGLG…ISSL), 69–89 (IPIY…LINA), 92–112 (FGLY…CIVV), 125–145 (ALSA…MFVL), and 182–202 (PFLL…MLAV).

Belongs to the NqrDE/RnfAE family. As to quaternary structure, the complex is composed of six subunits: RnfA, RnfB, RnfC, RnfD, RnfE and RnfG.

It localises to the cell inner membrane. Part of a membrane-bound complex that couples electron transfer with translocation of ions across the membrane. This chain is Ion-translocating oxidoreductase complex subunit E, found in Klebsiella pneumoniae (strain 342).